The sequence spans 229 residues: Sugar fermentation stimulation protein homolog (229 aa).

This sequence belongs to the SfsA family.

In Caldanaerobacter subterraneus subsp. tengcongensis (strain DSM 15242 / JCM 11007 / NBRC 100824 / MB4) (Thermoanaerobacter tengcongensis), this protein is Sugar fermentation stimulation protein homolog.